Reading from the N-terminus, the 69-residue chain is Toxin CSTX-11 (69 aa).

4 cysteine pairs are disulfide-bonded: C6–C21, C13–C30, C20–C47, and C32–C45.

Expressed by the venom gland.

It is found in the secreted. It localises to the target cell membrane. Its function is as follows. Spider venom toxin that shows calcium channel blocking activity and exhibits cytolytic activity by affecting the outer leaflet curvature and/or pore formation across the membrane. It blocks L-type calcium channels (Cav1/CACNA1) in mammalian neurons at nanomolar concentrations. Furthermore, it produces a slow voltage-independent block of mid/low and high voltage-activated calcium channels in cockroach neurons. Potassium ions, histamine, M-ctenitoxin-Cs1a (AC P83619), CSTX-9 (AC P58604), and CSTX-13 (AC P83919) synergistically increase the insecticidal activity of this toxin. In vivo, it causes paralysis in blow flies and provokes death in drosophila. The polypeptide is Toxin CSTX-11 (Cupiennius salei (American wandering spider)).